A 366-amino-acid chain; its full sequence is MIDRLMAREAIYQQSNPDPGGDPPEDGPPHGKNAADGGDEPDRGPDPDVTLRPQRMAEMVGQQDVIERLRIAIDAAQVRGEPLGHILFDGPPGLGKTTFATVIPSEMKTTVQMANGAGLKAPRDLLPYLTNVSRGSVLFIDEIHRVPRAIEEYLYTAMEDFRIDIVLGEGVNARTLNLSLEPFTLIGATTRAGMLTAPLRDRFQIREHLGWYTRKELAEIVLRNSKKLNIEVDPTSAGVIADRSRSTPRLANNRLLWVRDYAQSKTKGNVEASVCEAALDMIGIDHLGLDKQDRNYLDTLMRVFLGGPAGLDAIAHTMNVSSDTLEDEVEPFLLRSELLVRTRRGRLATPKAFEHMKRQMPDRPLS.

The interval 1 to 48 (MIDRLMAREAIYQQSNPDPGGDPPEDGPPHGKNAADGGDEPDRGPDPD) is disordered. Residues 21-212 (GDPPEDGPPH…FQIREHLGWY (192 aa)) form a large ATPase domain (RuvB-L) region. Residues L51, R52, G93, K96, T97, T98, 159–161 (EDF), R202, Y212, and R249 contribute to the ATP site. T97 provides a ligand contact to Mg(2+). The tract at residues 213-283 (TRKELAEIVL…VCEAALDMIG (71 aa)) is small ATPAse domain (RuvB-S). The segment at 286-366 (HLGLDKQDRN…KRQMPDRPLS (81 aa)) is head domain (RuvB-H). The DNA site is built by R341, R343, and R346.

The protein belongs to the RuvB family. Homohexamer. Forms an RuvA(8)-RuvB(12)-Holliday junction (HJ) complex. HJ DNA is sandwiched between 2 RuvA tetramers; dsDNA enters through RuvA and exits via RuvB. An RuvB hexamer assembles on each DNA strand where it exits the tetramer. Each RuvB hexamer is contacted by two RuvA subunits (via domain III) on 2 adjacent RuvB subunits; this complex drives branch migration. In the full resolvosome a probable DNA-RuvA(4)-RuvB(12)-RuvC(2) complex forms which resolves the HJ.

Its subcellular location is the cytoplasm. It catalyses the reaction ATP + H2O = ADP + phosphate + H(+). Functionally, the RuvA-RuvB-RuvC complex processes Holliday junction (HJ) DNA during genetic recombination and DNA repair, while the RuvA-RuvB complex plays an important role in the rescue of blocked DNA replication forks via replication fork reversal (RFR). RuvA specifically binds to HJ cruciform DNA, conferring on it an open structure. The RuvB hexamer acts as an ATP-dependent pump, pulling dsDNA into and through the RuvAB complex. RuvB forms 2 homohexamers on either side of HJ DNA bound by 1 or 2 RuvA tetramers; 4 subunits per hexamer contact DNA at a time. Coordinated motions by a converter formed by DNA-disengaged RuvB subunits stimulates ATP hydrolysis and nucleotide exchange. Immobilization of the converter enables RuvB to convert the ATP-contained energy into a lever motion, pulling 2 nucleotides of DNA out of the RuvA tetramer per ATP hydrolyzed, thus driving DNA branch migration. The RuvB motors rotate together with the DNA substrate, which together with the progressing nucleotide cycle form the mechanistic basis for DNA recombination by continuous HJ branch migration. Branch migration allows RuvC to scan DNA until it finds its consensus sequence, where it cleaves and resolves cruciform DNA. The sequence is that of Holliday junction branch migration complex subunit RuvB from Rhodopirellula baltica (strain DSM 10527 / NCIMB 13988 / SH1).